The sequence spans 366 residues: Mitogen-activated protein kinase p38a (366 aa).

The Protein kinase domain maps to 25–312; the sequence is YQDLQPVGSG…AEEALSHPYL (288 aa). ATP-binding positions include 31 to 39 and Lys54; that span reads VGSGAYGQV. Residue Asp154 is the Proton acceptor of the active site. Thr184 is subject to Phosphothreonine. A TXY motif is present at residues 184–186; the sequence is TGY. Tyr186 carries the post-translational modification Phosphotyrosine.

It belongs to the protein kinase superfamily. CMGC Ser/Thr protein kinase family. MAP kinase subfamily. Requires Mg(2+) as cofactor. Dually phosphorylated on Thr-184 and Tyr-186, which activates the enzyme.

The protein localises to the nucleus. It carries out the reaction L-seryl-[protein] + ATP = O-phospho-L-seryl-[protein] + ADP + H(+). It catalyses the reaction L-threonyl-[protein] + ATP = O-phospho-L-threonyl-[protein] + ADP + H(+). Activated by threonine and tyrosine phosphorylation by Mkk3 in response to environmental stress. In terms of biological role, kinase involved in a signal transduction pathway. May down-regulate insect immunity gene expression after prolonged infection. The protein is Mitogen-activated protein kinase p38a of Drosophila melanogaster (Fruit fly).